A 353-amino-acid polypeptide reads, in one-letter code: Histidinol-phosphate aminotransferase 1 (353 aa).

Lys-211 carries the post-translational modification N6-(pyridoxal phosphate)lysine.

This sequence belongs to the class-II pyridoxal-phosphate-dependent aminotransferase family. Histidinol-phosphate aminotransferase subfamily. Homodimer. The cofactor is pyridoxal 5'-phosphate.

It carries out the reaction L-histidinol phosphate + 2-oxoglutarate = 3-(imidazol-4-yl)-2-oxopropyl phosphate + L-glutamate. Its pathway is amino-acid biosynthesis; L-histidine biosynthesis; L-histidine from 5-phospho-alpha-D-ribose 1-diphosphate: step 7/9. This is Histidinol-phosphate aminotransferase 1 (hisC1) from Nostoc sp. (strain PCC 7120 / SAG 25.82 / UTEX 2576).